The sequence spans 279 residues: MVWFKRAKPAIRTTDRRDMPEGMWWKCDECGAMLHKKQLEDNFYTCSECGYHFRISPYKYFSLLFDGDKYQEFEDQLRSADPLGFTDTKKYLDRVHDIIEKSGKTEACRNAFGEADGRMLVVSAMDFGFIGGSMGSVVGEKIARAVDKAIDLNAPLLVISQSGGARMMEGAFSLMQMAKTAARLTRLSEKKLPFFSLMTDPTMGGITASFAMLGDVNISEPKALIGFAGPRVIRDTIKRDLPEGFQRAEFLLEHGFLDLIVHRRELKTQIVRLMTMLAP.

The 257-residue stretch at 23-279 folds into the CoA carboxyltransferase N-terminal domain; the sequence is MWWKCDECGA…IVRLMTMLAP (257 aa). 4 residues coordinate Zn(2+): Cys-27, Cys-30, Cys-46, and Cys-49. The C4-type zinc finger occupies 27–49; it reads CDECGAMLHKKQLEDNFYTCSEC.

It belongs to the AccD/PCCB family. As to quaternary structure, acetyl-CoA carboxylase is a heterohexamer composed of biotin carboxyl carrier protein (AccB), biotin carboxylase (AccC) and two subunits each of ACCase subunit alpha (AccA) and ACCase subunit beta (AccD). The cofactor is Zn(2+).

Its subcellular location is the cytoplasm. The enzyme catalyses N(6)-carboxybiotinyl-L-lysyl-[protein] + acetyl-CoA = N(6)-biotinyl-L-lysyl-[protein] + malonyl-CoA. The protein operates within lipid metabolism; malonyl-CoA biosynthesis; malonyl-CoA from acetyl-CoA: step 1/1. Its function is as follows. Component of the acetyl coenzyme A carboxylase (ACC) complex. Biotin carboxylase (BC) catalyzes the carboxylation of biotin on its carrier protein (BCCP) and then the CO(2) group is transferred by the transcarboxylase to acetyl-CoA to form malonyl-CoA. The polypeptide is Acetyl-coenzyme A carboxylase carboxyl transferase subunit beta (Chlorobium phaeobacteroides (strain DSM 266 / SMG 266 / 2430)).